A 205-amino-acid chain; its full sequence is Leucyl/phenylalanyl-tRNA--protein transferase (205 aa).

It belongs to the L/F-transferase family.

It is found in the cytoplasm. The catalysed reaction is N-terminal L-lysyl-[protein] + L-leucyl-tRNA(Leu) = N-terminal L-leucyl-L-lysyl-[protein] + tRNA(Leu) + H(+). The enzyme catalyses N-terminal L-arginyl-[protein] + L-leucyl-tRNA(Leu) = N-terminal L-leucyl-L-arginyl-[protein] + tRNA(Leu) + H(+). It catalyses the reaction L-phenylalanyl-tRNA(Phe) + an N-terminal L-alpha-aminoacyl-[protein] = an N-terminal L-phenylalanyl-L-alpha-aminoacyl-[protein] + tRNA(Phe). Functions in the N-end rule pathway of protein degradation where it conjugates Leu, Phe and, less efficiently, Met from aminoacyl-tRNAs to the N-termini of proteins containing an N-terminal arginine or lysine. This Mesorhizobium japonicum (strain LMG 29417 / CECT 9101 / MAFF 303099) (Mesorhizobium loti (strain MAFF 303099)) protein is Leucyl/phenylalanyl-tRNA--protein transferase.